The following is a 52-amino-acid chain: uncharacterized protein (52 aa).

This is an uncharacterized protein from Haemophilus influenzae (strain ATCC 51907 / DSM 11121 / KW20 / Rd).